The sequence spans 296 residues: 4-hydroxybenzoate octaprenyltransferase (296 aa).

8 helical membrane-spanning segments follow: residues 28-48 (PIGIYLLLWPTLWALWIAGKG), 52-72 (LINIVIFVLGVVLTRAGGCVI), 102-122 (ALVFFAVLMGISFLLVLLTNA), 146-166 (YYPQVVLGAAFSWGMPMAFTA), 169-189 (GDLPATAWLLYIANLLWTVGY), 219-239 (VIILTLQGLSLVCLLLAGARF), 241-261 (LGGWFHLGLLAAAGCFAWEFW), and 275-295 (FLHNHWAGLAIFVGIVADYAF).

The protein belongs to the UbiA prenyltransferase family. Mg(2+) serves as cofactor.

Its subcellular location is the cell inner membrane. It carries out the reaction all-trans-octaprenyl diphosphate + 4-hydroxybenzoate = 4-hydroxy-3-(all-trans-octaprenyl)benzoate + diphosphate. It participates in cofactor biosynthesis; ubiquinone biosynthesis. In terms of biological role, catalyzes the prenylation of para-hydroxybenzoate (PHB) with an all-trans polyprenyl group. Mediates the second step in the final reaction sequence of ubiquinone-8 (UQ-8) biosynthesis, which is the condensation of the polyisoprenoid side chain with PHB, generating the first membrane-bound Q intermediate 3-octaprenyl-4-hydroxybenzoate. This chain is 4-hydroxybenzoate octaprenyltransferase, found in Pseudomonas fluorescens (strain SBW25).